The sequence spans 533 residues: Protein disulfide isomerase-like 1-5 (533 aa).

The signal sequence occupies residues 1–22; that stretch reads MRARRVVAAAAVLLLFAVVAVA. 2 Thioredoxin domains span residues 51–196 and 387–516; these read LGGG…KDQT and LLEG…EKLQ. Cysteine 97 serves as the catalytic Nucleophile. An N-linked (GlcNAc...) asparagine glycan is attached at asparagine 151. Active-site nucleophile residues include cysteine 436 and cysteine 439. Cysteine 436 and cysteine 439 are joined by a disulfide. The Prevents secretion from ER signature appears at 530-533; sequence KDEL.

Belongs to the protein disulfide isomerase family.

The protein resides in the endoplasmic reticulum lumen. The enzyme catalyses Catalyzes the rearrangement of -S-S- bonds in proteins.. Its function is as follows. Acts as a protein-folding catalyst that interacts with nascent polypeptides to catalyze the formation, isomerization, and reduction or oxidation of disulfide bonds. May play a role in storage protein biogenesis. This Oryza sativa subsp. japonica (Rice) protein is Protein disulfide isomerase-like 1-5 (PDIL1-5).